The chain runs to 286 residues: Glycine--tRNA ligase alpha subunit (286 aa).

The protein belongs to the class-II aminoacyl-tRNA synthetase family. As to quaternary structure, tetramer of two alpha and two beta subunits.

The protein resides in the cytoplasm. The enzyme catalyses tRNA(Gly) + glycine + ATP = glycyl-tRNA(Gly) + AMP + diphosphate. This is Glycine--tRNA ligase alpha subunit from Thermotoga neapolitana (strain ATCC 49049 / DSM 4359 / NBRC 107923 / NS-E).